The sequence spans 481 residues: Trigger factor (481 aa).

In terms of domain architecture, PPIase FKBP-type spans 174-261; it reads GDIAVVGFKG…LKDLKTRELP (88 aa). Residues 430–481 are disordered; it reads ENSTVTEKAPEAESDAAKASKPAAAKKDASKAKTAKTSKAKTAKAESESAES. Positions 437 to 447 are enriched in basic and acidic residues; it reads KAPEAESDAAK. The segment covering 462–471 has biased composition (basic residues); it reads KTAKTSKAKT. A compositionally biased stretch (basic and acidic residues) spans 472–481; sequence AKAESESAES.

Belongs to the FKBP-type PPIase family. Tig subfamily.

Its subcellular location is the cytoplasm. The enzyme catalyses [protein]-peptidylproline (omega=180) = [protein]-peptidylproline (omega=0). Functionally, involved in protein export. Acts as a chaperone by maintaining the newly synthesized protein in an open conformation. Functions as a peptidyl-prolyl cis-trans isomerase. The chain is Trigger factor from Synechococcus sp. (strain WH7803).